Here is an 802-residue protein sequence, read N- to C-terminus: Leucine--tRNA ligase (802 aa).

The short motif at 40 to 51 (PYPSGAGLHVGH) is the 'HIGH' region element. A 'KMSKS' region motif is present at residues 576-580 (KMSKS). Lys579 lines the ATP pocket.

The protein belongs to the class-I aminoacyl-tRNA synthetase family.

The protein localises to the cytoplasm. The enzyme catalyses tRNA(Leu) + L-leucine + ATP = L-leucyl-tRNA(Leu) + AMP + diphosphate. This chain is Leucine--tRNA ligase, found in Bacillus mycoides (strain KBAB4) (Bacillus weihenstephanensis).